We begin with the raw amino-acid sequence, 444 residues long: Probable galactarate/D-glucarate transporter GarP (444 aa).

Over 1 to 11 the chain is Cytoplasmic; it reads MILDTVDEKKK. Residues 12 to 32 form a helical membrane-spanning segment; sequence GVHTRYLILLIIFIVTAVNYA. Topologically, residues 33-56 are periplasmic; the sequence is DRATLSIAGTEVAKELQLSAVSMG. The chain crosses the membrane as a helical span at residues 57–77; the sequence is YIFSAFGWAYLLMQIPGGWLL. Over 78–89 the chain is Cytoplasmic; that stretch reads DKFGSKKVYTYS. A run of 2 helical transmembrane segments spans residues 90–110 and 111–131; these read LFFW…PLAW and AGIS…PSFP. Residues 132 to 157 lie on the Cytoplasmic side of the membrane; sequence ANARIVAAWFPTKERGTASAIFNSAQ. 2 helical membrane passes run 158-178 and 179-199; these read YFSL…WGWE and HVFT…IKLI. Residues 200–252 are Cytoplasmic-facing; that stretch reads HNPTDHPRMSAEELKFISENGAVVDMDHKKPGSAAASGPKLHYIKQLLSNRMM. The helical transmembrane segment at 253-273 threads the bilayer; it reads LGVFFGQYFINTITWFFLTWF. Over 274 to 288 the chain is Periplasmic; it reads PIYLVQEKGMSILKV. The helical transmembrane segment at 289 to 309 threads the bilayer; that stretch reads GLVASIPALCGFAGGVLGGVF. At 310–319 the chain is on the cytoplasmic side; that stretch reads SDYLIKRGLS. The helical transmembrane segment at 320–340 threads the bilayer; it reads LTLARKLPIVLGMLLASTIIL. Residues 341 to 350 are Periplasmic-facing; sequence CNYTNNTTLV. A helical transmembrane segment spans residues 351-371; the sequence is VMLMALAFFGKGFGALGWPVI. Topologically, residues 372–385 are cytoplasmic; sequence SDTAPKEIVGLCGG. The chain crosses the membrane as a helical span at residues 386–406; that stretch reads VFNVFGNVASIVTPLVIGYLV. Over 407–413 the chain is Periplasmic; that stretch reads SELHSFN. Residues 414-434 traverse the membrane as a helical segment; the sequence is AALVFVGCSALMAMVCYLFVV. At 435–444 the chain is on the cytoplasmic side; that stretch reads GDIKRMELQK.

The protein belongs to the major facilitator superfamily. Phthalate permease family.

The protein resides in the cell inner membrane. The enzyme catalyses galactarate(in) + H(+)(in) = galactarate(out) + H(+)(out). It carries out the reaction D-glucarate(in) + H(+)(in) = D-glucarate(out) + H(+)(out). It catalyses the reaction (R)-glycerate(in) + H(+)(in) = (R)-glycerate(out) + H(+)(out). In terms of biological role, probably involved in the uptake of galactarate and/or D-glucarate. May also transport D-glycerate. The protein is Probable galactarate/D-glucarate transporter GarP of Escherichia coli (strain K12).